The primary structure comprises 295 residues: Structure-specific endonuclease subunit SLX1 (295 aa).

The 83-residue stretch at 11 to 93 (EFYGVYILQS…QHPKTSRHMA (83 aa)) folds into the GIY-YIG domain. The interval 85-133 (HPKTSRHMAGGGGSVTATAETAKSAPVAGKSDATSPAKNRRNAAPVARS) is disordered. Residues 205–272 (CCLCSDAIDY…IPSDVSCSQC (68 aa)) form an SLX1-type zinc finger.

This sequence belongs to the SLX1 family. As to quaternary structure, forms a heterodimer with SLX4. A divalent metal cation is required as a cofactor.

It is found in the nucleus. Its function is as follows. Catalytic subunit of the SLX1-SLX4 structure-specific endonuclease that resolves DNA secondary structures generated during DNA repair and recombination. Has endonuclease activity towards branched DNA substrates, introducing single-strand cuts in duplex DNA close to junctions with ss-DNA. The chain is Structure-specific endonuclease subunit SLX1 from Meyerozyma guilliermondii (strain ATCC 6260 / CBS 566 / DSM 6381 / JCM 1539 / NBRC 10279 / NRRL Y-324) (Yeast).